The primary structure comprises 63 residues: Small ribosomal subunit protein bS21 (63 aa).

Belongs to the bacterial ribosomal protein bS21 family.

This Phocaeicola vulgatus (strain ATCC 8482 / DSM 1447 / JCM 5826 / CCUG 4940 / NBRC 14291 / NCTC 11154) (Bacteroides vulgatus) protein is Small ribosomal subunit protein bS21.